The primary structure comprises 238 residues: 2-C-methyl-D-erythritol 4-phosphate cytidylyltransferase (238 aa).

The protein belongs to the IspD/TarI cytidylyltransferase family. IspD subfamily.

The catalysed reaction is 2-C-methyl-D-erythritol 4-phosphate + CTP + H(+) = 4-CDP-2-C-methyl-D-erythritol + diphosphate. Its pathway is isoprenoid biosynthesis; isopentenyl diphosphate biosynthesis via DXP pathway; isopentenyl diphosphate from 1-deoxy-D-xylulose 5-phosphate: step 2/6. Functionally, catalyzes the formation of 4-diphosphocytidyl-2-C-methyl-D-erythritol from CTP and 2-C-methyl-D-erythritol 4-phosphate (MEP). This chain is 2-C-methyl-D-erythritol 4-phosphate cytidylyltransferase, found in Salinibacter ruber (strain DSM 13855 / M31).